A 206-amino-acid polypeptide reads, in one-letter code: Adenylate kinase (206 aa).

An ATP-binding site is contributed by 10-15 (GAGKGT). The tract at residues 30 to 59 (STGDILREAVQKGTPLGKKAKEYMERGELV) is NMP. AMP contacts are provided by residues Thr31, 57–59 (ELV), 82–85 (GFPR), and Gln89. ATP-binding positions include Arg120, Arg124, and 133–134 (VY). Positions 123–153 (GRRINPETGEVYHVKYNPPPPGVKVIQREDD) are LID. Arg161 is an AMP binding site. Lys189 provides a ligand contact to ATP.

It belongs to the adenylate kinase family. Monomer.

The protein localises to the cytoplasm. It carries out the reaction AMP + ATP = 2 ADP. It functions in the pathway purine metabolism; AMP biosynthesis via salvage pathway; AMP from ADP: step 1/1. Catalyzes the reversible transfer of the terminal phosphate group between ATP and AMP. Plays an important role in cellular energy homeostasis and in adenine nucleotide metabolism. In Aquifex aeolicus (strain VF5), this protein is Adenylate kinase.